A 143-amino-acid polypeptide reads, in one-letter code: Nucleoside diphosphate kinase (143 aa).

K11, F59, R87, T93, R104, and N114 together coordinate ATP. The active-site Pros-phosphohistidine intermediate is H117.

The protein belongs to the NDK family. In terms of assembly, homotetramer. Mg(2+) serves as cofactor.

It localises to the cytoplasm. It carries out the reaction a 2'-deoxyribonucleoside 5'-diphosphate + ATP = a 2'-deoxyribonucleoside 5'-triphosphate + ADP. The catalysed reaction is a ribonucleoside 5'-diphosphate + ATP = a ribonucleoside 5'-triphosphate + ADP. Major role in the synthesis of nucleoside triphosphates other than ATP. The ATP gamma phosphate is transferred to the NDP beta phosphate via a ping-pong mechanism, using a phosphorylated active-site intermediate. This chain is Nucleoside diphosphate kinase, found in Enterobacter sp. (strain 638).